Reading from the N-terminus, the 143-residue chain is Small ribosomal subunit protein uS12 (143 aa).

The span at 1–20 shows a compositional bias: basic residues; the sequence is MGKCRGLRTARKLRSHRRDQ. The tract at residues 1–26 is disordered; it reads MGKCRGLRTARKLRSHRRDQKWHDKQ. K37 is covalently cross-linked (Glycyl lysine isopeptide (Lys-Gly) (interchain with G-Cter in SUMO2)). Residue K54 is modified to N6-succinyllysine. 3-hydroxyproline is present on P62. Position 135 is an N6-acetyllysine (K135).

This sequence belongs to the universal ribosomal protein uS12 family. As to quaternary structure, component of the 40S small ribosomal subunit. Part of the small subunit (SSU) processome, composed of more than 70 proteins and the RNA chaperone small nucleolar RNA (snoRNA) U3. In terms of processing, hydroxylation at Pro-62 affects translation termination efficiency.

It is found in the cytoplasm. The protein localises to the cytosol. The protein resides in the rough endoplasmic reticulum. It localises to the nucleus. Its subcellular location is the nucleolus. Its function is as follows. Component of the ribosome, a large ribonucleoprotein complex responsible for the synthesis of proteins in the cell. The small ribosomal subunit (SSU) binds messenger RNAs (mRNAs) and translates the encoded message by selecting cognate aminoacyl-transfer RNA (tRNA) molecules. The large subunit (LSU) contains the ribosomal catalytic site termed the peptidyl transferase center (PTC), which catalyzes the formation of peptide bonds, thereby polymerizing the amino acids delivered by tRNAs into a polypeptide chain. The nascent polypeptides leave the ribosome through a tunnel in the LSU and interact with protein factors that function in enzymatic processing, targeting, and the membrane insertion of nascent chains at the exit of the ribosomal tunnel. Plays an important role in translational accuracy. Part of the small subunit (SSU) processome, first precursor of the small eukaryotic ribosomal subunit. During the assembly of the SSU processome in the nucleolus, many ribosome biogenesis factors, an RNA chaperone and ribosomal proteins associate with the nascent pre-rRNA and work in concert to generate RNA folding, modifications, rearrangements and cleavage as well as targeted degradation of pre-ribosomal RNA by the RNA exosome. In Bos taurus (Bovine), this protein is Small ribosomal subunit protein uS12 (RPS23).